The sequence spans 246 residues: Biosynthetic peptidoglycan transglycosylase (246 aa).

Residues 28–48 (FALFLVLFLSSVVLFRFVPVP) form a helical membrane-spanning segment.

Belongs to the glycosyltransferase 51 family.

The protein localises to the cell inner membrane. It carries out the reaction [GlcNAc-(1-&gt;4)-Mur2Ac(oyl-L-Ala-gamma-D-Glu-L-Lys-D-Ala-D-Ala)](n)-di-trans,octa-cis-undecaprenyl diphosphate + beta-D-GlcNAc-(1-&gt;4)-Mur2Ac(oyl-L-Ala-gamma-D-Glu-L-Lys-D-Ala-D-Ala)-di-trans,octa-cis-undecaprenyl diphosphate = [GlcNAc-(1-&gt;4)-Mur2Ac(oyl-L-Ala-gamma-D-Glu-L-Lys-D-Ala-D-Ala)](n+1)-di-trans,octa-cis-undecaprenyl diphosphate + di-trans,octa-cis-undecaprenyl diphosphate + H(+). It functions in the pathway cell wall biogenesis; peptidoglycan biosynthesis. Its function is as follows. Peptidoglycan polymerase that catalyzes glycan chain elongation from lipid-linked precursors. This chain is Biosynthetic peptidoglycan transglycosylase, found in Pasteurella multocida (strain Pm70).